We begin with the raw amino-acid sequence, 231 residues long: 2-C-methyl-D-erythritol 4-phosphate cytidylyltransferase (231 aa).

Belongs to the IspD/TarI cytidylyltransferase family. IspD subfamily.

It carries out the reaction 2-C-methyl-D-erythritol 4-phosphate + CTP + H(+) = 4-CDP-2-C-methyl-D-erythritol + diphosphate. Its pathway is isoprenoid biosynthesis; isopentenyl diphosphate biosynthesis via DXP pathway; isopentenyl diphosphate from 1-deoxy-D-xylulose 5-phosphate: step 2/6. Catalyzes the formation of 4-diphosphocytidyl-2-C-methyl-D-erythritol from CTP and 2-C-methyl-D-erythritol 4-phosphate (MEP). This chain is 2-C-methyl-D-erythritol 4-phosphate cytidylyltransferase, found in Shewanella pealeana (strain ATCC 700345 / ANG-SQ1).